Consider the following 248-residue polypeptide: tRNA (guanine-N(1)-)-methyltransferase (248 aa).

Residues Gly117 and 137–142 (IGDFVL) each bind S-adenosyl-L-methionine.

Belongs to the RNA methyltransferase TrmD family. In terms of assembly, homodimer.

It localises to the cytoplasm. It catalyses the reaction guanosine(37) in tRNA + S-adenosyl-L-methionine = N(1)-methylguanosine(37) in tRNA + S-adenosyl-L-homocysteine + H(+). Functionally, specifically methylates guanosine-37 in various tRNAs. This is tRNA (guanine-N(1)-)-methyltransferase from Polynucleobacter asymbioticus (strain DSM 18221 / CIP 109841 / QLW-P1DMWA-1) (Polynucleobacter necessarius subsp. asymbioticus).